A 429-amino-acid chain; its full sequence is MKKSINLRSLAAQAIEQVVEKGQSLSTVLPPLQHKVSDKDKALLQELCFGVLRTLSQLEWLINKLMSRPMTGKQRTIHYLIMVGLYQLLYTRIPPHAALAETVEGAVAIKRMQFKGLINGVLRQFQRQQDELLAEFSGQDARWLHPMWLLNRFQTAWPREWQAVVEANNERPPMWLRVNRQHHSRDEWLKLLEENGMTGHIHPRYPDAVRLDAPAPVSALPGFEQGWVTVQDASAQGCVELLAPQNGETILDLCAAPGGKTTHILEAAPQASVMAVDVDAQRISRVYENLKRLKMKADVKVGDGRFPSTWCGETQFDRILLDAPCSATGVIRRHPDIKWLRRDSDINELAQLQSEILDAIWPHLKPGGTLLYATCSVLPEENSEQIRAFLSRTPDAQLDGTGSTQTPGIQNLPGATEGDGFFYAKLIKK.

S-adenosyl-L-methionine is bound by residues 254–260 (CAAPGGK), Asp277, Asp303, and Asp322. The active-site Nucleophile is Cys375.

Belongs to the class I-like SAM-binding methyltransferase superfamily. RsmB/NOP family.

Its subcellular location is the cytoplasm. The catalysed reaction is cytidine(967) in 16S rRNA + S-adenosyl-L-methionine = 5-methylcytidine(967) in 16S rRNA + S-adenosyl-L-homocysteine + H(+). Functionally, specifically methylates the cytosine at position 967 (m5C967) of 16S rRNA. This chain is Ribosomal RNA small subunit methyltransferase B, found in Cronobacter sakazakii (strain ATCC BAA-894) (Enterobacter sakazakii).